The following is a 444-amino-acid chain: Methylenetetrahydrofolate--tRNA-(uracil-5-)-methyltransferase TrmFO (444 aa).

An FAD-binding site is contributed by 10–15 (GAGLAG).

It belongs to the MnmG family. TrmFO subfamily. The cofactor is FAD.

The protein resides in the cytoplasm. The catalysed reaction is uridine(54) in tRNA + (6R)-5,10-methylene-5,6,7,8-tetrahydrofolate + NADH + H(+) = 5-methyluridine(54) in tRNA + (6S)-5,6,7,8-tetrahydrofolate + NAD(+). The enzyme catalyses uridine(54) in tRNA + (6R)-5,10-methylene-5,6,7,8-tetrahydrofolate + NADPH + H(+) = 5-methyluridine(54) in tRNA + (6S)-5,6,7,8-tetrahydrofolate + NADP(+). In terms of biological role, catalyzes the folate-dependent formation of 5-methyl-uridine at position 54 (M-5-U54) in all tRNAs. The chain is Methylenetetrahydrofolate--tRNA-(uracil-5-)-methyltransferase TrmFO from Streptococcus uberis (strain ATCC BAA-854 / 0140J).